The sequence spans 1016 residues: Mastermind-like protein 1 (1016 aa).

A required for interaction with NOTCH proteins region spans residues 1–123 (MVLPTCPMAE…NLDSATSPQN (123 aa)). S45 carries the phosphoserine modification. Disordered stretches follow at residues 65 to 184 (QAKA…LGLD), 263 to 487 (PDED…PSHV), 561 to 617 (KPKP…SQQQ), 658 to 681 (EKQQFQRHLTRPPPQYQDPTQGSF), and 796 to 953 (AYGQ…GGRA). Positions 67–76 (KAKRAGKHRQ) are enriched in basic residues. Residues 93–115 (DAADGPEHGRPATHLHDTVKRNL) show a composition bias toward basic and acidic residues. Positions 116–129 (DSATSPQNGDQQNG) are enriched in polar residues. The residue at position 120 (S120) is a Phosphoserine. Over residues 263 to 282 (PDEDMKDLFNEDFEEKKDPE) the composition is skewed to basic and acidic residues. Positions 283–292 (SSGSATQTPL) are enriched in polar residues. Phosphoserine occurs at positions 303 and 314. Over residues 322 to 353 (AGQTFLGPSSAPVSTDSPSLGGSQTLFHTSGQ) the composition is skewed to polar residues. S360 is subject to Phosphoserine. A compositionally biased stretch (polar residues) spans 392 to 403 (ELSSAHQLQQIA). Positions 413 to 426 (QNPQQATPAPAPGQ) are enriched in low complexity. 4 stretches are compositionally biased toward polar residues: residues 427-439 (MSTWQQTGPSHSS), 451-463 (SPSSYKQDFTNSK), 577-595 (QEQNPSSVPVQAQATSVGT), and 602-617 (VASSHNSSPYLSSQQQ). Low complexity predominate over residues 801–810 (SLGSSGLSQQ). Residue K822 is modified to N6-acetyllysine. Residues 834–885 (GQNSSWQHQGMPNLSGQTPGNSNVSPFTAASSFHMQQQAHLKMSSPQFSQAV) show a composition bias toward polar residues. The residue at position 1015 (S1015) is a Phosphoserine.

Belongs to the mastermind family. Interacts (via N-terminus) with NOTCH1, NOTCH2, NOTCH3 and NOTCH4 (via ankyrin repeat region). Interacts (via N-terminus) with p53 (via DNA-binding region). Forms a DNA-binding complex with Notch proteins and RBPSUH/RBP-J kappa/CBF1. Also binds CREBBP/CBP and CDK8. Forms a complex with PRAG1, NOTCH1 and MAML1, in a MAML1-dependent manner. In terms of tissue distribution, widely expressed with highest levels in heart, pancreas, peripheral blood leukocytes and spleen.

It is found in the nucleus speckle. Its function is as follows. Acts as a transcriptional coactivator for NOTCH proteins. Has been shown to amplify NOTCH-induced transcription of HES1. Enhances phosphorylation and proteolytic turnover of the NOTCH intracellular domain in the nucleus through interaction with CDK8. Binds to CREBBP/CBP which promotes nucleosome acetylation at NOTCH enhancers and activates transcription. Induces phosphorylation and localization of CREBBP to nuclear foci. Plays a role in hematopoietic development by regulating NOTCH-mediated lymphoid cell fate decisions. This Homo sapiens (Human) protein is Mastermind-like protein 1.